A 141-amino-acid polypeptide reads, in one-letter code: Nucleoside diphosphate kinase (141 aa).

6 residues coordinate ATP: K11, F59, R87, T93, R104, and N114. The active-site Pros-phosphohistidine intermediate is H117.

The protein belongs to the NDK family. Homotetramer. Requires Mg(2+) as cofactor.

The protein localises to the cytoplasm. The catalysed reaction is a 2'-deoxyribonucleoside 5'-diphosphate + ATP = a 2'-deoxyribonucleoside 5'-triphosphate + ADP. It carries out the reaction a ribonucleoside 5'-diphosphate + ATP = a ribonucleoside 5'-triphosphate + ADP. In terms of biological role, major role in the synthesis of nucleoside triphosphates other than ATP. The ATP gamma phosphate is transferred to the NDP beta phosphate via a ping-pong mechanism, using a phosphorylated active-site intermediate. This Pseudomonas syringae pv. tomato (strain ATCC BAA-871 / DC3000) protein is Nucleoside diphosphate kinase.